A 706-amino-acid chain; its full sequence is Protein kinase C theta type (706 aa).

The C2 domain maps to 1–107; that stretch reads MSPFLRIGLS…KNNGKTEIWL (107 aa). The residue at position 90 (Tyr90) is a Phosphotyrosine; by LCK. The Phorbol-ester/DAG-type 1 zinc-finger motif lies at 159 to 209; it reads CHEFTATFFPQPTFCSVCHEFVWGLNKQGYQCRQCNAAIHKKCIDKVIAKC. Phosphothreonine; by autocatalysis is present on Thr219. The segment at 231–281 adopts a Phorbol-ester/DAG-type 2 zinc-finger fold; that stretch reads PHRFKVYNYKSPTFCEHCGTLLWGLARQGLKCDACGMNVHHRCQTKVANLC. The residue at position 348 (Ser348) is a Phosphoserine. The region spanning 380–634 is the Protein kinase domain; that stretch reads FILHKMLGKG…RGDIRQHPLF (255 aa). ATP contacts are provided by residues 386–394 and Lys409; that span reads LGKGSFGKV. Residue Asp504 is the Proton acceptor of the active site. At Thr538 the chain carries Phosphothreonine; by PDPK1. The region spanning 635–706 is the AGC-kinase C-terminal domain; it reads REINWEELER…MNPGMERLIS (72 aa). Ser676, Ser685, and Ser695 each carry phosphoserine.

This sequence belongs to the protein kinase superfamily. AGC Ser/Thr protein kinase family. PKC subfamily. As to quaternary structure, part of a lipid raft complex composed at least of BCL10, CARD11, MALT1 and IKBKB. Interacts with GLRX3 (via N-terminus). Interacts with ECT2. Interacts with CCDC88A/GIV; the interaction leads to phosphorylation of CCDC88A and inhibition of its guanine nucleotide exchange factor activity. Interacts with PRKCH upstream open reading frame 2; the interaction leads to inhibition of kinase activity. Interacts with CD28. The cofactor is Mg(2+). Autophosphorylation at Thr-219 is required for targeting to the TCR and cellular function of PRKCQ upon antigen receptor ligation. Following TCR stimulation, phosphorylated at Tyr-90 and Ser-685. As to expression, expressed in skeletal muscle, T-cells, megakaryoblastic cells and platelets.

It is found in the cytoplasm. It localises to the cell membrane. It carries out the reaction L-seryl-[protein] + ATP = O-phospho-L-seryl-[protein] + ADP + H(+). It catalyses the reaction L-threonyl-[protein] + ATP = O-phospho-L-threonyl-[protein] + ADP + H(+). Novel PKCs (PRKCD, PRKCE, PRKCH and PRKCQ) are calcium-insensitive, but activated by diacylglycerol (DAG) and phosphatidylserine. Three specific sites; Thr-538 (activation loop of the kinase domain), Ser-676 (turn motif) and Ser-695 (hydrophobic region), need to be phosphorylated for its full activation. Inhibited by PRKCH upstream open reading frame 2. In terms of biological role, calcium-independent, phospholipid- and diacylglycerol (DAG)-dependent serine/threonine-protein kinase that mediates non-redundant functions in T-cell receptor (TCR) signaling, including T-cells activation, proliferation, differentiation and survival, by mediating activation of multiple transcription factors such as NF-kappa-B, JUN, NFATC1 and NFATC2. In TCR-CD3/CD28-co-stimulated T-cells, is required for the activation of NF-kappa-B and JUN, which in turn are essential for IL2 production, and participates in the calcium-dependent NFATC1 and NFATC2 transactivation. Mediates the activation of the canonical NF-kappa-B pathway (NFKB1) by direct phosphorylation of CARD11 on several serine residues, inducing CARD11 association with lipid rafts and recruitment of the BCL10-MALT1 complex, which then activates IKK complex, resulting in nuclear translocation and activation of NFKB1. May also play an indirect role in activation of the non-canonical NF-kappa-B (NFKB2) pathway. In the signaling pathway leading to JUN activation, acts by phosphorylating the mediator STK39/SPAK and may not act through MAP kinases signaling. Plays a critical role in TCR/CD28-induced NFATC1 and NFATC2 transactivation by participating in the regulation of reduced inositol 1,4,5-trisphosphate generation and intracellular calcium mobilization. After costimulation of T-cells through CD28 can phosphorylate CBLB and is required for the ubiquitination and subsequent degradation of CBLB, which is a prerequisite for the activation of TCR. During T-cells differentiation, plays an important role in the development of T-helper 2 (Th2) cells following immune and inflammatory responses, and, in the development of inflammatory autoimmune diseases, is necessary for the activation of IL17-producing Th17 cells. May play a minor role in Th1 response. Upon TCR stimulation, mediates T-cell protective survival signal by phosphorylating BAD, thus protecting T-cells from BAD-induced apoptosis, and by up-regulating BCL-X(L)/BCL2L1 levels through NF-kappa-B and JUN pathways. In platelets, regulates signal transduction downstream of the ITGA2B, CD36/GP4, F2R/PAR1 and F2RL3/PAR4 receptors, playing a positive role in 'outside-in' signaling and granule secretion signal transduction. May relay signals from the activated ITGA2B receptor by regulating the uncoupling of WASP and WIPF1, thereby permitting the regulation of actin filament nucleation and branching activity of the Arp2/3 complex. May mediate inhibitory effects of free fatty acids on insulin signaling by phosphorylating IRS1, which in turn blocks IRS1 tyrosine phosphorylation and downstream activation of the PI3K/AKT pathway. Phosphorylates MSN (moesin) in the presence of phosphatidylglycerol or phosphatidylinositol. Phosphorylates PDPK1 at 'Ser-504' and 'Ser-532' and negatively regulates its ability to phosphorylate PKB/AKT1. Phosphorylates CCDC88A/GIV and inhibits its guanine nucleotide exchange factor activity. Phosphorylates and activates LRRK1, which phosphorylates RAB proteins involved in intracellular trafficking. The polypeptide is Protein kinase C theta type (PRKCQ) (Homo sapiens (Human)).